Consider the following 323-residue polypeptide: UDP-galactose/UDP-glucose transporter 7 (323 aa).

Residues 1-10 lie on the Cytoplasmic side of the membrane; the sequence is MEVQAEMEPT. The helical transmembrane segment at 11-31 threads the bilayer; it reads SSISLVAAVSYGIASMAMVFI. The Lumenal portion of the chain corresponds to 32 to 35; that stretch reads NKAV. Residues 36–58 traverse the membrane as a helical segment; the sequence is IMQYPHSMTVLTLQQLATSLLIH. The Cytoplasmic segment spans residues 59 to 78; sequence FGRRMGYTRAKGIDMATAKK. A helical transmembrane segment spans residues 79-97; that stretch reads LLPVSIFYNANVAFALASL. Residues 98-101 are Lumenal-facing; that stretch reads KGVN. A helical transmembrane segment spans residues 102–124; sequence IPMYIAIKRLTPLAVLISGVLFG. Topologically, residues 125 to 132 are cytoplasmic; it reads KGKPTTQV. Residues 133 to 153 form a helical membrane-spanning segment; it reads ALSVLLTAAGCVIAALGDFSF. Position 154 (aspartate 154) is a topological domain, lumenal. Residues 155-175 form a helical membrane-spanning segment; that stretch reads LFGYGLALTSVFFQTMYLVLV. Residues 176 to 186 are Cytoplasmic-facing; the sequence is EKSGAEDGLSS. Residues 187-207 traverse the membrane as a helical segment; sequence IEIMFYNSFLSLPFLSILIIV. At 208–226 the chain is on the lumenal side; that stretch reads TGEFPNSLSLLLAKCSYLP. A helical membrane pass occupies residues 227–247; the sequence is FLVILILSLVMGIVLNFTMFL. The Cytoplasmic portion of the chain corresponds to 248–252; sequence CTIVN. A helical membrane pass occupies residues 253-275; the sequence is SALTTTIVGVLKGVGSTTLGFVL. The Lumenal segment spans residues 276 to 278; it reads LGG. Residues 279–301 traverse the membrane as a helical segment; sequence VEVHALNVSGLVVNTAGGVWYSY. The Cytoplasmic portion of the chain corresponds to 302–323; it reads AKYRQKKAKPAKLMSDLEAHKK.

It belongs to the TPT transporter family. UGnT (TC 2.A.7.15) subfamily. Widely expressed with highest expression in roots.

It is found in the golgi apparatus membrane. In terms of biological role, nucleotide-sugar transporter that transports UDP-glucose and UDP-galactose. Plays a role in lateral root and root hair development. The polypeptide is UDP-galactose/UDP-glucose transporter 7 (Arabidopsis thaliana (Mouse-ear cress)).